The sequence spans 139 residues: Hydrogenase maturation factor HypA (139 aa).

A Ni(2+)-binding site is contributed by His2. Positions 73, 76, 110, and 113 each coordinate Zn(2+).

Belongs to the HypA/HybF family.

Its function is as follows. Involved in the maturation of [NiFe] hydrogenases. Required for nickel insertion into the metal center of the hydrogenase. This is Hydrogenase maturation factor HypA from Thermococcus onnurineus (strain NA1).